Consider the following 274-residue polypeptide: Large ribosomal subunit protein uL2cz/uL2cy (274 aa).

Disordered regions lie at residues 1–21 and 224–274; these read MAIHLYKTSTPGTRNGAVDSQ and NPVD…RRSK.

The protein belongs to the universal ribosomal protein uL2 family. Part of the 50S ribosomal subunit.

The protein resides in the plastid. It is found in the chloroplast. The polypeptide is Large ribosomal subunit protein uL2cz/uL2cy (rpl2-A) (Gossypium hirsutum (Upland cotton)).